Reading from the N-terminus, the 1189-residue chain is Increased DNA methylation 1 (1189 aa).

Disordered stretches follow at residues 475 to 498 (KNLH…HDSL) and 523 to 597 (SRDE…CRLL). Basic and acidic residues predominate over residues 523-532 (SRDERLRNEK). Composition is skewed to basic residues over residues 541-550 (KKGRKKARKH) and 565-590 (NKGK…KRNN). The PHD-type 1 zinc finger occupies 726–771 (DDSCGVCGDGGELICCDNCPSTFHQACLSMQVLPEGSWYCSSCTCW). The segment at 767 to 823 (SCTCWICSELVSDNAERSQDFKCSQCAHKYHGTCLQGISKRRKLFPETYFCGKNCEK) adopts a PHD-type 2; degenerate zinc-finger fold. The region spanning 879 to 1024 (MEESFLSMVD…GTTLLKKTLY (146 aa)) is the N-acetyltransferase domain. Residues 1031–1157 (TMKGVCLSKE…SSSSAALEEV (127 aa)) form a disordered region. Basic and acidic residues-rich tracts occupy residues 1038-1050 (SKER…KEAD), 1102-1114 (NPSR…DRPN), and 1129-1145 (CLQK…KETT). Residues 1147-1157 (ASSSSAALEEV) are compositionally biased toward low complexity.

In terms of assembly, interacts (via N-terminus) with IDM2. Interacts with IMD3. Part of a complex made of MBD7, IDM1, IDM2 and IDM3. Expressed in cotyledons and hypocotyls in young seedlings.

Its subcellular location is the nucleus. In terms of biological role, histone H3 acetyltransferase that binds methylated DNA at chromatin sites lacking histone H3K4 di- or trimethylation and catalyzes H3K18 and H3K23 acetylation. Prevents the transcriptional silencing of transgenes and of some endogenous genes. Requires the presence of IDM2 for efficient H3K18 acetylation, but not for H3K23 acetylation. In Arabidopsis thaliana (Mouse-ear cress), this protein is Increased DNA methylation 1.